The sequence spans 292 residues: tRNA pseudouridine synthase B (292 aa).

Catalysis depends on aspartate 38, which acts as the Nucleophile.

Belongs to the pseudouridine synthase TruB family. Type 1 subfamily.

It catalyses the reaction uridine(55) in tRNA = pseudouridine(55) in tRNA. Its function is as follows. Responsible for synthesis of pseudouridine from uracil-55 in the psi GC loop of transfer RNAs. The polypeptide is tRNA pseudouridine synthase B (Streptococcus gordonii (strain Challis / ATCC 35105 / BCRC 15272 / CH1 / DL1 / V288)).